Reading from the N-terminus, the 206-residue chain is Ribosomal RNA large subunit methyltransferase E (206 aa).

5 residues coordinate S-adenosyl-L-methionine: Gly-60, Trp-62, Asp-80, Asp-96, and Asp-121. Catalysis depends on Lys-161, which acts as the Proton acceptor.

It belongs to the class I-like SAM-binding methyltransferase superfamily. RNA methyltransferase RlmE family.

The protein localises to the cytoplasm. The catalysed reaction is uridine(2552) in 23S rRNA + S-adenosyl-L-methionine = 2'-O-methyluridine(2552) in 23S rRNA + S-adenosyl-L-homocysteine + H(+). In terms of biological role, specifically methylates the uridine in position 2552 of 23S rRNA at the 2'-O position of the ribose in the fully assembled 50S ribosomal subunit. The polypeptide is Ribosomal RNA large subunit methyltransferase E (Francisella tularensis subsp. novicida (strain U112)).